Reading from the N-terminus, the 300-residue chain is Acetylglutamate kinase (300 aa).

Residues 68-69 (GG), Arg-90, and Asn-195 contribute to the substrate site.

Belongs to the acetylglutamate kinase family. ArgB subfamily.

The protein resides in the cytoplasm. It catalyses the reaction N-acetyl-L-glutamate + ATP = N-acetyl-L-glutamyl 5-phosphate + ADP. It participates in amino-acid biosynthesis; L-arginine biosynthesis; N(2)-acetyl-L-ornithine from L-glutamate: step 2/4. In terms of biological role, catalyzes the ATP-dependent phosphorylation of N-acetyl-L-glutamate. This chain is Acetylglutamate kinase, found in Stutzerimonas stutzeri (strain A1501) (Pseudomonas stutzeri).